The following is a 322-amino-acid chain: CRISPR-associated endonuclease Cas1 (322 aa).

3 residues coordinate Mn(2+): E149, H214, and E229.

The protein belongs to the CRISPR-associated endonuclease Cas1 family. In terms of assembly, homodimer, forms a heterotetramer with a Cas2 homodimer. It depends on Mg(2+) as a cofactor. Requires Mn(2+) as cofactor.

In terms of biological role, CRISPR (clustered regularly interspaced short palindromic repeat), is an adaptive immune system that provides protection against mobile genetic elements (viruses, transposable elements and conjugative plasmids). CRISPR clusters contain spacers, sequences complementary to antecedent mobile elements, and target invading nucleic acids. CRISPR clusters are transcribed and processed into CRISPR RNA (crRNA). Acts as a dsDNA endonuclease. Involved in the integration of spacer DNA into the CRISPR cassette. This Pyrococcus horikoshii (strain ATCC 700860 / DSM 12428 / JCM 9974 / NBRC 100139 / OT-3) protein is CRISPR-associated endonuclease Cas1.